A 315-amino-acid polypeptide reads, in one-letter code: Methionyl-tRNA formyltransferase (315 aa).

113-116 (SILP) lines the (6S)-5,6,7,8-tetrahydrofolate pocket.

It belongs to the Fmt family.

It catalyses the reaction L-methionyl-tRNA(fMet) + (6R)-10-formyltetrahydrofolate = N-formyl-L-methionyl-tRNA(fMet) + (6S)-5,6,7,8-tetrahydrofolate + H(+). In terms of biological role, attaches a formyl group to the free amino group of methionyl-tRNA(fMet). The formyl group appears to play a dual role in the initiator identity of N-formylmethionyl-tRNA by promoting its recognition by IF2 and preventing the misappropriation of this tRNA by the elongation apparatus. This chain is Methionyl-tRNA formyltransferase, found in Vibrio cholerae serotype O1 (strain M66-2).